The primary structure comprises 151 residues: MKVIFTQDVRGRGKRGQVKDVPDGYAQNYLIKRGLAKEATKGNMNTLKRVEANEKAAYEAEKAEAERIKAELEKDDTIVEFKSKAGNDSRLFGSISSKKIVEGLEKQYGIKVDKRKLNLPEPIKTLGYTNVHAKLFKGVEATVRVHVTEQD.

This sequence belongs to the bacterial ribosomal protein bL9 family.

Binds to the 23S rRNA. In Lactobacillus acidophilus (strain ATCC 700396 / NCK56 / N2 / NCFM), this protein is Large ribosomal subunit protein bL9.